Consider the following 861-residue polypeptide: Protein argonaute-4 (861 aa).

The PAZ domain occupies 219-338 (PIIEFMCEVL…LPLEVCNIVA (120 aa)). One can recognise a Piwi domain in the interval 509–820 (LIVVILPGKT…VAFRARYHLV (312 aa)). Positions 825–846 (DSAEGSHVSGQSNGRDPQALAK) are disordered.

It belongs to the argonaute family. Ago subfamily. In terms of assembly, interacts with EIF4B, IMP8, PRMT5, TNRC6A and TNRC6B. Interacts with ZFP36. Ubiquitinated on surface-exposed lysines by a SCF-like E3 ubiquitin-protein ligase complex containing ZSWIM8 during target-directed microRNA degradation (TDMD), a process that mediates degradation of microRNAs (miRNAs). Ubiquitination by the SCF-like E3 ubiquitin-protein ligase complex containing ZSWIM8 leads to its subsequent degradation, thereby exposing miRNAs for degradation. ZSWIM8 recognizes and binds AGO4 when it is engaged with a TDMD target.

It localises to the cytoplasm. The protein resides in the P-body. Its function is as follows. Required for RNA-mediated gene silencing (RNAi). Binds to short RNAs such as microRNAs (miRNAs) and represses the translation of mRNAs which are complementary to them. Lacks endonuclease activity and does not appear to cleave target mRNAs. The protein is Protein argonaute-4 (Ago4) of Mus musculus (Mouse).